We begin with the raw amino-acid sequence, 144 residues long: Large ribosomal subunit protein uL15 (144 aa).

Residues 1–48 (MRLNTLSPAAGSKSAAKRVGRGIGSGTGKTCGRGHKGQKSRSGGGVRI) are disordered. Residues 21–31 (RGIGSGTGKTC) show a composition bias toward gly residues.

It belongs to the universal ribosomal protein uL15 family. As to quaternary structure, part of the 50S ribosomal subunit.

In terms of biological role, binds to the 23S rRNA. This chain is Large ribosomal subunit protein uL15, found in Shewanella woodyi (strain ATCC 51908 / MS32).